The primary structure comprises 65 residues: Sec-independent protein translocase protein TatA (65 aa).

A helical membrane pass occupies residues 1-21 (MFGLGGQELVLILLIILLLFG).

It belongs to the TatA/E family. Forms a complex with TatC.

It is found in the cell inner membrane. Functionally, part of the twin-arginine translocation (Tat) system that transports large folded proteins containing a characteristic twin-arginine motif in their signal peptide across membranes. TatA could form the protein-conducting channel of the Tat system. This chain is Sec-independent protein translocase protein TatA, found in Chlorobium phaeobacteroides (strain DSM 266 / SMG 266 / 2430).